Here is a 78-residue protein sequence, read N- to C-terminus: MKTLLLTLVVVTIVCLDLGYTLKCHTTQFRNIETCQKWETVCFQRAVKPHPSSMIVLRGCTSSCGKGETCCATDLCNR.

Residues 1–21 (MKTLLLTLVVVTIVCLDLGYT) form the signal peptide. 4 disulfides stabilise this stretch: Cys24–Cys42, Cys35–Cys60, Cys64–Cys70, and Cys71–Cys76.

Expressed by the venom gland.

It is found in the secreted. In terms of biological role, blocks both the muscle-twitch response to nerve stimulation and the response to exogenous acetylcholine. The chain is Neurotoxin 3FTx-LK from Bungarus fasciatus (Banded krait).